The following is a 532-amino-acid chain: Methionine--tRNA ligase (532 aa).

Positions 16-26 match the 'HIGH' region motif; that stretch reads YYVNDVPHLGS. The Zn(2+) site is built by C131, C134, C149, and H152. The short motif at 305–309 is the 'KMSKS' region element; the sequence is KMGKS. K308 serves as a coordination point for ATP.

This sequence belongs to the class-I aminoacyl-tRNA synthetase family. MetG type 2A subfamily. In terms of assembly, monomer. The cofactor is Zn(2+).

The protein resides in the cytoplasm. The catalysed reaction is tRNA(Met) + L-methionine + ATP = L-methionyl-tRNA(Met) + AMP + diphosphate. Functionally, is required not only for elongation of protein synthesis but also for the initiation of all mRNA translation through initiator tRNA(fMet) aminoacylation. The chain is Methionine--tRNA ligase (metG) from Synechocystis sp. (strain ATCC 27184 / PCC 6803 / Kazusa).